The primary structure comprises 289 residues: Iron-sulfur cluster carrier protein (289 aa).

Low complexity predominate over residues 1–18 (MAEECSGNCDSCGSSSDC). A disordered region spans residues 1 to 20 (MAEECSGNCDSCGSSSDCSD). 48 to 55 (GKGGVGKS) is an ATP binding site.

Belongs to the Mrp/NBP35 ATP-binding proteins family. As to quaternary structure, homodimer.

Functionally, binds and transfers iron-sulfur (Fe-S) clusters to target apoproteins. Can hydrolyze ATP. This Methanococcus maripaludis (strain DSM 14266 / JCM 13030 / NBRC 101832 / S2 / LL) protein is Iron-sulfur cluster carrier protein.